Consider the following 111-residue polypeptide: Phosphoribosyl-ATP pyrophosphatase (111 aa).

This sequence belongs to the PRA-PH family.

The protein resides in the cytoplasm. It carries out the reaction 1-(5-phospho-beta-D-ribosyl)-ATP + H2O = 1-(5-phospho-beta-D-ribosyl)-5'-AMP + diphosphate + H(+). It functions in the pathway amino-acid biosynthesis; L-histidine biosynthesis; L-histidine from 5-phospho-alpha-D-ribose 1-diphosphate: step 2/9. This Pseudomonas putida (strain ATCC 700007 / DSM 6899 / JCM 31910 / BCRC 17059 / LMG 24140 / F1) protein is Phosphoribosyl-ATP pyrophosphatase.